The primary structure comprises 92 residues: Acylphosphatase (92 aa).

One can recognise an Acylphosphatase-like domain in the interval R5 to H92. Residues R20 and N38 contribute to the active site.

The protein belongs to the acylphosphatase family.

It carries out the reaction an acyl phosphate + H2O = a carboxylate + phosphate + H(+). The polypeptide is Acylphosphatase (acyP) (Marinobacter nauticus (strain ATCC 700491 / DSM 11845 / VT8) (Marinobacter aquaeolei)).